The primary structure comprises 538 residues: Fructooligosaccharide ABC transporter substrate-binding protein FusA (538 aa).

Positions 1 to 22 are cleaved as a signal peptide; the sequence is MKFKTFSKSAVLLTASLAVLAA. A lipid anchor (N-palmitoyl cysteine) is attached at C23. C23 carries the S-diacylglycerol cysteine lipid modification. E167 lines the substrate pocket. Ca(2+) contacts are provided by D215, N217, N219, E221, D223, and E224. N235 is a binding site for substrate. 4 residues coordinate Ca(2+): D263, F264, D267, and N268. Substrate is bound by residues W314, N318, K353, W384, R419, and E423.

This sequence belongs to the bacterial solute-binding protein 1 family. As to quaternary structure, the complex is composed of two ATP-binding proteins (MsmK), two transmembrane proteins (FusB and FusC) and a solute-binding protein (FusA).

It is found in the cell membrane. Part of the ABC transporter complex FusABC-MsmK involved in short- and long-chain fructooligosaccharide (FOS) import. Required for the utilization of long-chain FOSs. Binds kestose, nystose, fructofuranosyl-nystose and inulin, but not sucrose. Has a preference for long-chain FOSs (tetrasaccharides and larger). This is Fructooligosaccharide ABC transporter substrate-binding protein FusA from Streptococcus pneumoniae serotype 4 (strain ATCC BAA-334 / TIGR4).